Reading from the N-terminus, the 172-residue chain is Shikimate kinase (172 aa).

Residue 11-16 participates in ATP binding; the sequence is GAGKST. Position 15 (S15) interacts with Mg(2+). Substrate contacts are provided by D33, R57, and G79. R117 provides a ligand contact to ATP. Position 136 (R136) interacts with substrate. Position 153 (R153) interacts with ATP.

The protein belongs to the shikimate kinase family. In terms of assembly, monomer. It depends on Mg(2+) as a cofactor.

Its subcellular location is the cytoplasm. The catalysed reaction is shikimate + ATP = 3-phosphoshikimate + ADP + H(+). The protein operates within metabolic intermediate biosynthesis; chorismate biosynthesis; chorismate from D-erythrose 4-phosphate and phosphoenolpyruvate: step 5/7. Catalyzes the specific phosphorylation of the 3-hydroxyl group of shikimic acid using ATP as a cosubstrate. The polypeptide is Shikimate kinase (Pseudomonas fluorescens (strain Pf0-1)).